Consider the following 107-residue polypeptide: uncharacterized protein (107 aa).

A helical transmembrane segment spans residues 13 to 33 (VLIVTFLSSFIFIVWLPVALV).

Its subcellular location is the membrane. This is an uncharacterized protein from Saccharomyces cerevisiae (strain ATCC 204508 / S288c) (Baker's yeast).